The primary structure comprises 115 residues: Nitrogen regulatory protein P-II 1 (115 aa).

Position 54 is an O-UMP-tyrosine (Tyr54).

This sequence belongs to the P(II) protein family.

Functionally, could be involved in the regulation of nitrogen fixation. This chain is Nitrogen regulatory protein P-II 1, found in Methanothermobacter thermautotrophicus (strain ATCC 29096 / DSM 1053 / JCM 10044 / NBRC 100330 / Delta H) (Methanobacterium thermoautotrophicum).